Here is a 663-residue protein sequence, read N- to C-terminus: Leishmanolysin-like peptidase (663 aa).

His246 is a binding site for Zn(2+). Glu247 is a catalytic residue. 2 residues coordinate Zn(2+): His250 and His353.

Belongs to the peptidase M8 family. The cofactor is Zn(2+).

It is found in the cytoplasm. In terms of biological role, essential for the coordination of mitotic progression, and also plays a role in cell migration. The chain is Leishmanolysin-like peptidase from Caenorhabditis elegans.